Consider the following 282-residue polypeptide: Probable endonuclease 4 (282 aa).

Zn(2+)-binding residues include histidine 69, histidine 109, glutamate 145, aspartate 179, histidine 182, histidine 216, aspartate 229, histidine 231, and glutamate 261.

This sequence belongs to the AP endonuclease 2 family. Requires Zn(2+) as cofactor.

The enzyme catalyses Endonucleolytic cleavage to 5'-phosphooligonucleotide end-products.. Its function is as follows. Endonuclease IV plays a role in DNA repair. It cleaves phosphodiester bonds at apurinic or apyrimidinic (AP) sites, generating a 3'-hydroxyl group and a 5'-terminal sugar phosphate. The protein is Probable endonuclease 4 of Campylobacter hominis (strain ATCC BAA-381 / DSM 21671 / CCUG 45161 / LMG 19568 / NCTC 13146 / CH001A).